The following is a 283-amino-acid chain: Elongation factor Ts (283 aa).

Residues 79 to 82 (TDFV) form an involved in Mg(2+) ion dislocation from EF-Tu region.

It belongs to the EF-Ts family.

It localises to the cytoplasm. Associates with the EF-Tu.GDP complex and induces the exchange of GDP to GTP. It remains bound to the aminoacyl-tRNA.EF-Tu.GTP complex up to the GTP hydrolysis stage on the ribosome. The protein is Elongation factor Ts of Shewanella frigidimarina (strain NCIMB 400).